The chain runs to 1088 residues: Calcium-transporting ATPase 5, plasma membrane-type (1088 aa).

Residues 1 to 11 (MESASSSLATS) show a composition bias toward low complexity. The segment at 1–32 (MESASSSLATSGRRRSSSGGGGGSWGSIGSAA) is disordered. Topologically, residues 1 to 198 (MESASSSLAT…FLWDACKDLT (198 aa)) are cytoplasmic. A helical transmembrane segment spans residues 199-219 (LIILMVAAAVSLALGITTEGI). The Extracellular segment spans residues 220 to 221 (KE). Residues 222–242 (GWYDGASIAFAVLLVVVVTAT) traverse the membrane as a helical segment. Topologically, residues 243–338 (SDYKQSLQFQ…MSGCKVADGY (96 aa)) are cytoplasmic. A helical membrane pass occupies residues 339–359 (GTMLVTAVGINTEWGLLMASI). Residues 360-375 (SEDSGEETPLQVRLNG) are Extracellular-facing. A helical membrane pass occupies residues 376 to 396 (VATFIGMVGLSVALAVLVVLL). The Cytoplasmic portion of the chain corresponds to 397-425 (ARYFTGHTYNPDGSVQYVKGKMGVGQTIR). A helical membrane pass occupies residues 426-446 (GIVGIFTVAVTIVVVAVPEGL). The Extracellular portion of the chain corresponds to 447–851 (PLAVTLTLAF…GRSVYANIQK (405 aa)). Asp-486 serves as the catalytic 4-aspartylphosphate intermediate. N-linked (GlcNAc...) asparagine glycans are attached at residues Asn-532, Asn-569, and Asn-737. Residues Asp-794 and Asp-798 each coordinate Mg(2+). A helical transmembrane segment spans residues 852-872 (FIQFQLTVNVAALIINVVAAV). Residues 873–880 (SSGNVPLN) are Cytoplasmic-facing. The helical transmembrane segment at 881 to 901 (AVQLLWVNLIMDTLGALALAT) threads the bilayer. Residues 902-919 (EPPTDHLMQRPPVGRREP) are Extracellular-facing. The helical transmembrane segment at 920-940 (LITNVMWRNLIIMALFQVIVL) threads the bilayer. Over 941–1000 (LTLNFRGTSLLQLKNDNQAHADKVKNTFIFNTFVLCQVFNEFNARKPDELNIFKGITGNH) the chain is Cytoplasmic. The helical transmembrane segment at 1001-1021 (LFMAIVAITVVLQALIVEFLG) threads the bilayer. Residues 1022 to 1030 (KFTSTTRLT) are Extracellular-facing. A helical membrane pass occupies residues 1031–1051 (WQLWLVSIGLAFFSWPLAFVG). Residues 1052-1088 (KLIPVPERPLGDFFACCCPGSKQAADAKGDDADHSDV) are Cytoplasmic-facing.

The protein belongs to the cation transport ATPase (P-type) (TC 3.A.3) family. Type IIB subfamily. Interacts with NOH1.

It is found in the cell membrane. The enzyme catalyses Ca(2+)(in) + ATP + H2O = Ca(2+)(out) + ADP + phosphate + H(+). With respect to regulation, activated by calmodulin. This magnesium-dependent enzyme catalyzes the hydrolysis of ATP coupled with the translocation of calcium from the cytosol out of the cell, into the endoplasmic reticulum, or into organelles. Involved in salt and drought stress tolerance. Involved in cold stress tolerance. The polypeptide is Calcium-transporting ATPase 5, plasma membrane-type (Oryza sativa subsp. japonica (Rice)).